We begin with the raw amino-acid sequence, 566 residues long: OTU domain-containing protein 5 (566 aa).

Disordered regions lie at residues 1 to 117 and 145 to 175; these read MTIL…GDAL and GPGHSKRRRQAPGVGAVGGASPEREEVGAGY. Residues 11–30 show a composition bias toward pro residues; that stretch reads PPDADPANEPPPPGPLPPAP. Over residues 34–47 the composition is skewed to gly residues; sequence AGVGVGGGGTGVGG. A compositionally biased stretch (pro residues) spans 63-75; sequence ASPPPQGPLPGPP. At Ser64 the chain carries Phosphoserine. The span at 84–97 shows a compositional bias: low complexity; it reads AVPPGAVAGPRPQQ. The span at 105 to 115 shows a compositional bias: gly residues; sequence GPGGPGGGPGD. A Phosphoserine modification is found at Ser165. Residue Tyr175 is modified to Phosphotyrosine. Position 177 is a phosphoserine (Ser177). At Thr195 the chain carries Phosphothreonine. Positions 213–336 constitute an OTU domain; that stretch reads FIIKQMKEDG…NIHYNSVVNP (124 aa). The cys-loop stretch occupies residues 218–224; it reads MKEDGAC. Residue Asp221 is part of the active site. The Nucleophile role is filled by Cys224. A variable-loop region spans residues 273 to 283; that stretch reads KRKNNCHGNHI. At Ser323 the chain carries Phosphoserine. Positions 324-329 are his-loop; that stretch reads YHRNIH. Residue His329 is part of the active site. Phosphoserine is present on residues Ser332 and Ser370. Positions 413–499 are disordered; that stretch reads ARQVRGPSQP…TSSQFSAGGD (87 aa). Composition is skewed to low complexity over residues 425–438 and 445–457; these read ASATCSSATAAASS and SRSPRQRSSASSP. Residue Ser447 is modified to Phosphoserine. Thr502 is modified (phosphothreonine). The residue at position 503 (Ser503) is a Phosphoserine.

Belongs to the peptidase C85 family. In terms of assembly, interacts with TRAF3. Post-translationally, phosphorylation at Ser-177 is required for deubiquitinating activity. Phosphorylation at Ser-323, Ser-332 and Ser-503 by MTOR promotes its activity.

Its subcellular location is the nucleus. It catalyses the reaction Thiol-dependent hydrolysis of ester, thioester, amide, peptide and isopeptide bonds formed by the C-terminal Gly of ubiquitin (a 76-residue protein attached to proteins as an intracellular targeting signal).. Its activity is regulated as follows. Inhibited by N-ethyl-maleimide (NEM). Functionally, deubiquitinating enzyme that functions as a negative regulator of the innate immune system. Has peptidase activity towards 'Lys-48'- and 'Lys-63'-linked polyubiquitin chains. Can also cleave 'Lys-11'-linked ubiquitin chains (in vitro). Acts via TRAF3 deubiquitination and subsequent suppression of type I interferon (IFN) production. Controls neuroectodermal differentiation through cleaving 'Lys-48'-linked ubiquitin chains to counteract degradation of select chromatin regulators such as ARID1A, HDAC2 and HCF1. Acts as a positive regulator of mTORC1 and mTORC2 signaling following phosphorylation by MTOR: acts by mediating deubiquitination of BTRC, leading to its stability. In Mus musculus (Mouse), this protein is OTU domain-containing protein 5.